The chain runs to 531 residues: SWI/SNF-related matrix-associated actin-dependent regulator of chromatin subfamily D member 2 (531 aa).

Residues 20 to 85 are disordered; that stretch reads AVAAALGAPP…MSPGSRMPMA (66 aa). A compositionally biased stretch (low complexity) spans 34–45; it reads PGMLPSPALRGP. Asymmetric dimethylarginine occurs at positions 81 and 104. A Phosphoserine modification is found at Ser203. The interval 205-226 is disordered; sequence SKADGDNAGTAGTPGGTPAADK. Residues 210 to 225 show a composition bias toward low complexity; it reads DNAGTAGTPGGTPAAD. Thr217 carries the phosphothreonine modification. Residue Lys226 forms a Glycyl lysine isopeptide (Lys-Gly) (interchain with G-Cter in SUMO2) linkage. An SWIB/MDM2 domain is found at 306–383; that stretch reads HQPPQYKLDP…PMKLAGLLQH (78 aa).

Belongs to the SMARCD family. Component of the multiprotein chromatin-remodeling complexes SWI/SNF: SWI/SNF-A (BAF), SWI/SNF-B (PBAF) and related complexes. The canonical complex contains a catalytic subunit (either SMARCA4/BRG1/BAF190A or SMARCA2/BRM/BAF190B), and at least SMARCE1, ACTL6A/BAF53, SMARCC1/BAF155, SMARCC2/BAF170, and SMARCB1/SNF5/BAF47. Other subunits specific to each of the complexes may also be present permitting several possible combinations developmentally and tissue specific. Component of the BAF complex, which includes at least actin (ACTB), ARID1A/BAF250A, ARID1B/BAF250B, SMARCA2/BRM, SMARCA4/BRG1, ACTL6A/BAF53, ACTL6B/BAF53B, SMARCE1/BAF57, SMARCC1/BAF155, SMARCC2/BAF170, SMARCB1/SNF5/INI1, and one or more SMARCD1/BAF60A, SMARCD2/BAF60B, or SMARCD3/BAF60C. In muscle cells, the BAF complex also contains DPF3. Component of the SWI/SNF-B (PBAF) chromatin remodeling complex, at least composed of SMARCA4/BRG1, SMARCB1/BAF47/SNF5, ACTL6A/BAF53A or ACTL6B/BAF53B, SMARCE1/BAF57, SMARCD1/BAF60A, SMARCD2/BAF60B, perhaps SMARCD3/BAF60C, SMARCC1/BAF155, SMARCC2/BAF170, PBRM1/BAF180, ARID2/BAF200 and actin (ACTB). Interacts with UNKL. Interacts with CEBPE. Post-translationally, ubiquitinated through a signaling process involving RAC1 and the RING finger protein UNKL.

The protein localises to the nucleus. In terms of biological role, involved in transcriptional activation and repression of select genes by chromatin remodeling (alteration of DNA-nucleosome topology). Component of SWI/SNF chromatin remodeling complexes that carry out key enzymatic activities, changing chromatin structure by altering DNA-histone contacts within a nucleosome in an ATP-dependent manner. Critical regulator of myeloid differentiation, controlling granulocytopoiesis and the expression of genes involved in neutrophil granule formation. The chain is SWI/SNF-related matrix-associated actin-dependent regulator of chromatin subfamily D member 2 (Smarcd2) from Mus musculus (Mouse).